A 361-amino-acid chain; its full sequence is Ribosomal RNA large subunit methyltransferase M (361 aa).

S-adenosyl-L-methionine is bound by residues Ser190, 223-226 (CPGG), Asp242, Asp262, and Asp280. The active-site Proton acceptor is the Lys309.

This sequence belongs to the class I-like SAM-binding methyltransferase superfamily. RNA methyltransferase RlmE family. RlmM subfamily. In terms of assembly, monomer.

It is found in the cytoplasm. The enzyme catalyses cytidine(2498) in 23S rRNA + S-adenosyl-L-methionine = 2'-O-methylcytidine(2498) in 23S rRNA + S-adenosyl-L-homocysteine + H(+). Catalyzes the 2'-O-methylation at nucleotide C2498 in 23S rRNA. The chain is Ribosomal RNA large subunit methyltransferase M from Actinobacillus pleuropneumoniae serotype 7 (strain AP76).